Consider the following 298-residue polypeptide: Serine/threonine-protein kinase 1 (298 aa).

Residues 38–276 enclose the Protein kinase domain; it reads FIATRPMFEG…FKSLVSHPWF (239 aa). ATP-binding positions include 45–53 and lysine 65; that span reads FEGGRNNVF. Aspartate 152 functions as the Proton acceptor in the catalytic mechanism.

The protein belongs to the protein kinase superfamily. Ser/Thr protein kinase family.

The protein localises to the virion. Its subcellular location is the host cytoplasm. It carries out the reaction L-seryl-[protein] + ATP = O-phospho-L-seryl-[protein] + ADP + H(+). It catalyses the reaction L-threonyl-[protein] + ATP = O-phospho-L-threonyl-[protein] + ADP + H(+). In terms of biological role, essential for viral replication. It may mediate the virus' progression through DNA replication. The chain is Serine/threonine-protein kinase 1 from Ornithodoros (relapsing fever ticks).